The sequence spans 163 residues: Phosphopantetheine adenylyltransferase (163 aa).

Thr9 provides a ligand contact to substrate. Residues 9–10 and His17 each bind ATP; that span reads TF. Substrate is bound by residues Lys41, Leu76, and Arg90. ATP-binding positions include 91–93, Glu101, and 126–132; these read GLR and YSFISST.

This sequence belongs to the bacterial CoaD family. As to quaternary structure, homohexamer. Mg(2+) is required as a cofactor.

Its subcellular location is the cytoplasm. It catalyses the reaction (R)-4'-phosphopantetheine + ATP + H(+) = 3'-dephospho-CoA + diphosphate. It functions in the pathway cofactor biosynthesis; coenzyme A biosynthesis; CoA from (R)-pantothenate: step 4/5. Its function is as follows. Reversibly transfers an adenylyl group from ATP to 4'-phosphopantetheine, yielding dephospho-CoA (dPCoA) and pyrophosphate. This chain is Phosphopantetheine adenylyltransferase, found in Dichelobacter nodosus (strain VCS1703A).